We begin with the raw amino-acid sequence, 782 residues long: MSKVRVYEYAKEHQVSSKKVIEALKDLGIEVANHMSTINENALRQLDNAIDGTNKKAEAPKKETTSNENGNSKGPNKPNMTNSNEKSNKPNNPAGQANKPATANKSQGAKPATNKPANTSKQTQSSGNQQQAGGQKRNNNNNSNRPGGGNPNRPGGNNRPNRGGNFNNKGRNTKKKGKLNHSTVPPTPPKPKELPEKIVFSESLTVAELAKKLYREPSELIKKLFMLGVVATINQSLDKDAIELICDDYGVQVEEEIKVDVTDLDVYFENELNEAVDESKLVERPPVVTIMGHVDHGKTTLLDSLRNTKVTLGEAGGITQHIGAYQLEIHDKKITFLDTPGHAAFTAMRARGAQITDITILVVAADDGVMPQTIEAINHAKAAGMPIIVAVNKIDKPQANPDRVMQELTEYELVPEAWGGDTIFAPISAKFGEGLENLLDMILLVSEVEELKANPDRRAIGSVIEAELDKGRGPVATLLVQDGTLNIGDPIVVGNTFGRVRAMVNDLGRRVKKVGPSTPVEITGLNDVPQAGDRFVVFEDEKTARNIGETRASRALVAQRSATNRVSLDNLFEHMKAGEMKEVNVIIKADVQGSVEALAASLRKIDVEGVNVKIIHTAVGAINESDITLAAASNAIVIGFNVRPTAQAREAAENESVDIRLHRVIYKAIDEIEAAMKGMLDPEFQEKIIGQAQVRQTINVSKVGTIAGCYVTDGKITRDSGVRIIRDGIVVFEGEIATLKRFKDDAKEVAKGYECGITVQNFNDIKEDDVIEAYVMEEIERK.

The tract at residues 47-196 (DNAIDGTNKK…TPPKPKELPE (150 aa)) is disordered. Basic and acidic residues predominate over residues 53-65 (TNKKAEAPKKETT). Residues 66–81 (SNENGNSKGPNKPNMT) show a composition bias toward polar residues. Composition is skewed to low complexity over residues 82–93 (NSNEKSNKPNNP) and 118–170 (NTSK…NNKG). A tr-type G domain is found at 283–452 (ERPPVVTIMG…LLVSEVEELK (170 aa)). A G1 region spans residues 292–299 (GHVDHGKT). 292-299 (GHVDHGKT) is a binding site for GTP. The segment at 317–321 (GITQH) is G2. The tract at residues 338–341 (DTPG) is G3. GTP is bound by residues 338–342 (DTPGH) and 392–395 (NKID). The interval 392–395 (NKID) is G4. The G5 stretch occupies residues 428–430 (SAK).

The protein belongs to the TRAFAC class translation factor GTPase superfamily. Classic translation factor GTPase family. IF-2 subfamily.

The protein localises to the cytoplasm. One of the essential components for the initiation of protein synthesis. Protects formylmethionyl-tRNA from spontaneous hydrolysis and promotes its binding to the 30S ribosomal subunits. Also involved in the hydrolysis of GTP during the formation of the 70S ribosomal complex. This Listeria monocytogenes serotype 4b (strain CLIP80459) protein is Translation initiation factor IF-2.